Consider the following 291-residue polypeptide: Kidney mitochondrial carrier protein 1 (291 aa).

N-acetylserine is present on serine 2. Solcar repeat units lie at residues lysine 7–leucine 96, glutamate 104–histidine 189, and aspartate 198–leucine 289. 6 helical membrane passes run phenylalanine 9 to isoleucine 26, glycine 71 to threonine 89, leucine 106 to alanine 124, glycine 164 to tyrosine 183, phenylalanine 204 to valine 224, and glycine 264 to tyrosine 283.

The protein belongs to the mitochondrial carrier (TC 2.A.29) family. As to quaternary structure, interacts with VDAC1. As to expression, present in kidney (at protein level). Expressed predominantly within the kidney cortex in the proximal and distal tubules and at lower levels in the testis and white adipose tissue.

The protein resides in the mitochondrion inner membrane. It carries out the reaction sulfite(in) + sulfate(out) = sulfite(out) + sulfate(in). The catalysed reaction is thiosulfate(in) + sulfate(out) = thiosulfate(out) + sulfate(in). It catalyses the reaction sulfate(out) + phosphate(in) = sulfate(in) + phosphate(out). The enzyme catalyses oxalate(in) + sulfate(out) = oxalate(out) + sulfate(in). It carries out the reaction malonate(in) + sulfate(out) = malonate(out) + sulfate(in). The catalysed reaction is maleate(in) + sulfate(out) = maleate(out) + sulfate(in). It catalyses the reaction (S)-malate(in) + sulfate(out) = (S)-malate(out) + sulfate(in). The enzyme catalyses (3S)-citramalate(in) + sulfate(out) = (3S)-citramalate(out) + sulfate(in). It carries out the reaction (3R)-citramalate(in) + sulfate(out) = (3R)-citramalate(out) + sulfate(in). The catalysed reaction is sulfate(out) + succinate(in) = sulfate(in) + succinate(out). It catalyses the reaction (S,S)-tartrate(in) + sulfate(out) = (S,S)-tartrate(out) + sulfate(in). The enzyme catalyses (2R,3R)-tartrate(in) + sulfate(out) = (2R,3R)-tartrate(out) + sulfate(in). It carries out the reaction D-aspartate(in) + sulfate(out) = D-aspartate(out) + sulfate(in). The catalysed reaction is L-aspartate(in) + sulfate(out) = L-aspartate(out) + sulfate(in). It catalyses the reaction sulfate(in) = sulfate(out). The enzyme catalyses phosphate(in) = phosphate(out). It carries out the reaction (S)-malate(out) = (S)-malate(in). Functionally, antiporter that transports inorganic anions (sulfate, sulfite, thiosulfate and phosphate) and, to a lesser extent, a variety of dicarboxylates (e.g. malonate, malate and citramalate) and, even more so, aspartate. The sulfate/sulfate exchange is much higher than the phosphate/phosphate and malate/malate exchanges. The transport affinities is higher for sulfate and thiosulfate than for any other substrate. May catalyze the export of sulfite and thiosulfate (the hydrogen sulfide degradation products) from the mitochondria, thereby modulating the level of the hydrogen sulfide. Also may mediate a very low unidirectional transport of sulfate, phosphate and (S)-malate. This chain is Kidney mitochondrial carrier protein 1, found in Mus musculus (Mouse).